We begin with the raw amino-acid sequence, 233 residues long: Phosphoribosylaminoimidazole-succinocarboxamide synthase (233 aa).

The protein belongs to the SAICAR synthetase family.

It carries out the reaction 5-amino-1-(5-phospho-D-ribosyl)imidazole-4-carboxylate + L-aspartate + ATP = (2S)-2-[5-amino-1-(5-phospho-beta-D-ribosyl)imidazole-4-carboxamido]succinate + ADP + phosphate + 2 H(+). The protein operates within purine metabolism; IMP biosynthesis via de novo pathway; 5-amino-1-(5-phospho-D-ribosyl)imidazole-4-carboxamide from 5-amino-1-(5-phospho-D-ribosyl)imidazole-4-carboxylate: step 1/2. The polypeptide is Phosphoribosylaminoimidazole-succinocarboxamide synthase (Staphylococcus saprophyticus subsp. saprophyticus (strain ATCC 15305 / DSM 20229 / NCIMB 8711 / NCTC 7292 / S-41)).